Consider the following 253-residue polypeptide: Large ribosomal subunit protein uL10m (253 aa).

The transit peptide at 1–24 (MANLMQRSLPLTTTRTPVLQFLRF) directs the protein to the mitochondrion.

It belongs to the universal ribosomal protein uL10 family. In terms of assembly, component of the mitochondrial ribosome large subunit (39S) which comprises a 16S rRNA and about 50 distinct proteins.

It localises to the mitochondrion. The polypeptide is Large ribosomal subunit protein uL10m (mRpL10) (Drosophila pseudoobscura pseudoobscura (Fruit fly)).